The primary structure comprises 77 residues: Conotoxin Vc1 (77 aa).

An N-terminal signal peptide occupies residues M1 to A22. 2 propeptides span residues H23–R58 and R73–Y77.

The protein belongs to the conotoxin H superfamily. As to expression, expressed by the venom duct.

It is found in the secreted. Its function is as follows. Probable toxin. This Conus victoriae (Queen Victoria cone) protein is Conotoxin Vc1.